Consider the following 173-residue polypeptide: Cytochrome c-type biogenesis protein CcmE (173 aa).

The Cytoplasmic portion of the chain corresponds to 1–8 (MMSRKKRR). Residues 9–29 (LWIVIACGIGLSTAVALMLFA) traverse the membrane as a helical; Signal-anchor for type II membrane protein segment. The Periplasmic portion of the chain corresponds to 30-173 (FRSSLSFFMS…PAQIEASNNG (144 aa)). Heme-binding residues include histidine 127 and tyrosine 131. Positions 145 to 173 (KWNPKFGPPPNAGAWDDKSPAQIEASNNG) are disordered.

Belongs to the CcmE/CycJ family.

The protein resides in the cell inner membrane. In terms of biological role, heme chaperone required for the biogenesis of c-type cytochromes. Transiently binds heme delivered by CcmC and transfers the heme to apo-cytochromes in a process facilitated by CcmF and CcmH. This chain is Cytochrome c-type biogenesis protein CcmE, found in Acidiphilium cryptum (strain JF-5).